A 185-amino-acid chain; its full sequence is Crossover junction endodeoxyribonuclease RuvC (185 aa).

Catalysis depends on residues aspartate 16, glutamate 75, and aspartate 147. Mg(2+) is bound by residues aspartate 16, glutamate 75, and aspartate 147.

Belongs to the RuvC family. Homodimer which binds Holliday junction (HJ) DNA. The HJ becomes 2-fold symmetrical on binding to RuvC with unstacked arms; it has a different conformation from HJ DNA in complex with RuvA. In the full resolvosome a probable DNA-RuvA(4)-RuvB(12)-RuvC(2) complex forms which resolves the HJ. Mg(2+) is required as a cofactor.

It is found in the cytoplasm. It catalyses the reaction Endonucleolytic cleavage at a junction such as a reciprocal single-stranded crossover between two homologous DNA duplexes (Holliday junction).. The RuvA-RuvB-RuvC complex processes Holliday junction (HJ) DNA during genetic recombination and DNA repair. Endonuclease that resolves HJ intermediates. Cleaves cruciform DNA by making single-stranded nicks across the HJ at symmetrical positions within the homologous arms, yielding a 5'-phosphate and a 3'-hydroxyl group; requires a central core of homology in the junction. The consensus cleavage sequence is 5'-(A/T)TT(C/G)-3'. Cleavage occurs on the 3'-side of the TT dinucleotide at the point of strand exchange. HJ branch migration catalyzed by RuvA-RuvB allows RuvC to scan DNA until it finds its consensus sequence, where it cleaves and resolves the cruciform DNA. In Aromatoleum aromaticum (strain DSM 19018 / LMG 30748 / EbN1) (Azoarcus sp. (strain EbN1)), this protein is Crossover junction endodeoxyribonuclease RuvC.